The sequence spans 474 residues: Glutamate--tRNA ligase 2 (474 aa).

The short motif at 16 to 26 (PSPTGFLHIGG) is the 'HIGH' region element. The 'KMSKS' region motif lies at 245–249 (KLSKR). Lysine 248 contacts ATP.

It belongs to the class-I aminoacyl-tRNA synthetase family. Glutamate--tRNA ligase type 1 subfamily. In terms of assembly, monomer.

The protein resides in the cytoplasm. The catalysed reaction is tRNA(Glu) + L-glutamate + ATP = L-glutamyl-tRNA(Glu) + AMP + diphosphate. Catalyzes the attachment of glutamate to tRNA(Glu) in a two-step reaction: glutamate is first activated by ATP to form Glu-AMP and then transferred to the acceptor end of tRNA(Glu). In Rhizorhabdus wittichii (strain DSM 6014 / CCUG 31198 / JCM 15750 / NBRC 105917 / EY 4224 / RW1) (Sphingomonas wittichii), this protein is Glutamate--tRNA ligase 2.